We begin with the raw amino-acid sequence, 193 residues long: dCTP deaminase (193 aa).

DCTP contacts are provided by residues 110–115, Asp-128, 136–138, Tyr-171, Lys-178, and Gln-182; these read RSSLAR and VLE. Glu-138 (proton donor/acceptor) is an active-site residue. Residues 168-193 are disordered; it reads DRPYNRRQDAKYKNQQGAVSSRIDED. Basic and acidic residues predominate over residues 170–179; the sequence is PYNRRQDAKY.

The protein belongs to the dCTP deaminase family. Homotrimer.

The catalysed reaction is dCTP + H2O + H(+) = dUTP + NH4(+). The protein operates within pyrimidine metabolism; dUMP biosynthesis; dUMP from dCTP (dUTP route): step 1/2. Functionally, catalyzes the deamination of dCTP to dUTP. The polypeptide is dCTP deaminase (Photorhabdus laumondii subsp. laumondii (strain DSM 15139 / CIP 105565 / TT01) (Photorhabdus luminescens subsp. laumondii)).